A 104-amino-acid chain; its full sequence is Ribonuclease P protein component 4 (104 aa).

Residues cysteine 57, cysteine 60, cysteine 83, and cysteine 86 each contribute to the Zn(2+) site.

Belongs to the eukaryotic/archaeal RNase P protein component 4 family. In terms of assembly, consists of a catalytic RNA component and at least 4-5 protein subunits. Requires Zn(2+) as cofactor.

It is found in the cytoplasm. It carries out the reaction Endonucleolytic cleavage of RNA, removing 5'-extranucleotides from tRNA precursor.. Its function is as follows. Part of ribonuclease P, a protein complex that generates mature tRNA molecules by cleaving their 5'-ends. The polypeptide is Ribonuclease P protein component 4 (Saccharolobus islandicus (strain M.14.25 / Kamchatka #1) (Sulfolobus islandicus)).